Consider the following 290-residue polypeptide: Feruloyl esterase D (290 aa).

Positions 1–25 (MAGLHSRLTTFLLLLLSALPAIAAA) are cleaved as a signal peptide. A disordered region spans residues 260–280 (HGGDHNPSQRDPGQNDPFAPR).

This sequence belongs to the serine esterase family.

The protein localises to the secreted. It carries out the reaction feruloyl-polysaccharide + H2O = ferulate + polysaccharide.. Functionally, involved in degradation of plant cell walls. Hydrolyzes the feruloyl-arabinose ester bond in arabinoxylans as well as the feruloyl-galactose and feruloyl-arabinose ester bonds in pectin. Active against methyl esters of ferulate (MFA), sinapate (MSA), caffeate (MCA) and p-coumarate (MpCA). This Neurospora crassa (strain ATCC 24698 / 74-OR23-1A / CBS 708.71 / DSM 1257 / FGSC 987) protein is Feruloyl esterase D.